Here is a 1076-residue protein sequence, read N- to C-terminus: Inositol-1,4,5-trisphosphate 5-phosphatase 1 (1076 aa).

An SAC domain is found at 144 to 474 (LRKLLTNGSF…GDALARIYTG (331 aa)). A catalytic region spans residues 534 to 880 (YDPIHEYVNH…QEVRDASQTS (347 aa)). Disordered regions lie at residues 930–958 (AAPP…DWIS) and 977–1076 (LSPA…KPLV). Composition is skewed to low complexity over residues 977 to 1004 (LSPA…IKPN) and 1025 to 1040 (SGSS…LTPV). A compositionally biased stretch (polar residues) spans 1065-1076 (PEESSISWKPLV).

This sequence belongs to the synaptojanin family. The protein in the central section; belongs to the inositol 1,4,5-trisphosphate 5-phosphatase family. Requires Mg(2+) as cofactor.

The protein localises to the cytoplasm. The catalysed reaction is a 1,2-diacyl-sn-glycero-3-phospho-(1D-myo-inositol-4,5-bisphosphate) + H2O = a 1,2-diacyl-sn-glycero-3-phospho-(1D-myo-inositol 4-phosphate) + phosphate. In terms of biological role, controls the cellular levels and subcellular distribution of phosphatidylinositol 3-phosphate and phosphatidylinositol 4,5-bisphosphate. Involved in distinct membrane trafficking and signal transduction pathways. Highly active against a range of soluble and lipid inositol phosphates. Active in dephosphorylating the 5-position of Ins(1,4,5)P3 and Ins(1,3,4,5)P4 and to a lesser extent Ins(1,4,5,6)P4. The enzyme is also active against PI(4,5)P2 presented in sonicated vesicles and Triton mixed micelles, and somewhat less active against PI(3,5)P2 in unilamellar vesicles. Activity against PI(3,5)P2 drops sharply when this substrate is presented in mixed micelles. Also hydrolyzes PIP3 to produce PI(3,4)P2. In Schizosaccharomyces pombe (strain 972 / ATCC 24843) (Fission yeast), this protein is Inositol-1,4,5-trisphosphate 5-phosphatase 1 (syj1).